The chain runs to 119 residues: Phospholipase A2 A2-actitoxin-Cgg2a (119 aa).

Intrachain disulfides connect cysteine 25/cysteine 119, cysteine 27/cysteine 43, cysteine 42/cysteine 101, cysteine 49/cysteine 94, cysteine 61/cysteine 87, and cysteine 78/cysteine 92. Glycine 28 and glycine 30 together coordinate Ca(2+). Histidine 46 is an active-site residue. Position 47 (aspartate 47) interacts with Ca(2+). Aspartate 95 is an active-site residue.

The protein belongs to the phospholipase A2 family. In terms of assembly, homodimer. Ca(2+) serves as cofactor.

Its subcellular location is the secreted. It localises to the nematocyst. The catalysed reaction is a 1,2-diacyl-sn-glycero-3-phosphocholine + H2O = a 1-acyl-sn-glycero-3-phosphocholine + a fatty acid + H(+). Sea anemone phospholipase A2 (PLA2). When incubated with plasma, this protein shows a moderate anticoagulant activity (0.15 ug of enzyme/200 uL of plasma), inhibiting clotting induced by thrombin. This enzyme also induces myotoxicity, and edema. PLA2 catalyzes the calcium-dependent hydrolysis of the 2-acyl groups in 3-sn-phosphoglycerides. The polypeptide is Phospholipase A2 A2-actitoxin-Cgg2a (Condylactis gigantea (Giant Caribbean anemone)).